The following is a 380-amino-acid chain: Succinyl-diaminopimelate desuccinylase (380 aa).

Position 69 (histidine 69) interacts with Zn(2+). Aspartate 71 is an active-site residue. Aspartate 102 is a binding site for Zn(2+). Catalysis depends on glutamate 135, which acts as the Proton acceptor. Zn(2+) contacts are provided by glutamate 136, glutamate 164, and histidine 353.

The protein belongs to the peptidase M20A family. DapE subfamily. As to quaternary structure, homodimer. It depends on Zn(2+) as a cofactor. Requires Co(2+) as cofactor.

The enzyme catalyses N-succinyl-(2S,6S)-2,6-diaminopimelate + H2O = (2S,6S)-2,6-diaminopimelate + succinate. It functions in the pathway amino-acid biosynthesis; L-lysine biosynthesis via DAP pathway; LL-2,6-diaminopimelate from (S)-tetrahydrodipicolinate (succinylase route): step 3/3. In terms of biological role, catalyzes the hydrolysis of N-succinyl-L,L-diaminopimelic acid (SDAP), forming succinate and LL-2,6-diaminopimelate (DAP), an intermediate involved in the bacterial biosynthesis of lysine and meso-diaminopimelic acid, an essential component of bacterial cell walls. The sequence is that of Succinyl-diaminopimelate desuccinylase from Phenylobacterium zucineum (strain HLK1).